Reading from the N-terminus, the 387-residue chain is LL-diaminopimelate aminotransferase (387 aa).

Positions 14 and 39 each coordinate substrate. Pyridoxal 5'-phosphate contacts are provided by residues Tyr68, 102–103 (SK), Tyr127, Asn177, Tyr208, and 236–238 (SLS). Positions 103, 127, and 177 each coordinate substrate. N6-(pyridoxal phosphate)lysine is present on Lys239. Arg247 lines the pyridoxal 5'-phosphate pocket. Residue Arg365 participates in substrate binding.

The protein belongs to the class-I pyridoxal-phosphate-dependent aminotransferase family. LL-diaminopimelate aminotransferase subfamily. Homodimer. Requires pyridoxal 5'-phosphate as cofactor.

The enzyme catalyses (2S,6S)-2,6-diaminopimelate + 2-oxoglutarate = (S)-2,3,4,5-tetrahydrodipicolinate + L-glutamate + H2O + H(+). Its pathway is amino-acid biosynthesis; L-lysine biosynthesis via DAP pathway; LL-2,6-diaminopimelate from (S)-tetrahydrodipicolinate (aminotransferase route): step 1/1. Functionally, involved in the synthesis of meso-diaminopimelate (m-DAP or DL-DAP), required for both lysine and peptidoglycan biosynthesis. Catalyzes the direct conversion of tetrahydrodipicolinate to LL-diaminopimelate. The chain is LL-diaminopimelate aminotransferase from Aquifex aeolicus (strain VF5).